Here is a 229-residue protein sequence, read N- to C-terminus: UPF0758 protein CLL_A0562 (229 aa).

The region spanning 107-229 (KIMSPNDLAM…FISLKEKGFI (123 aa)) is the MPN domain. Zn(2+) contacts are provided by H178, H180, and D191. The JAMM motif motif lies at 178 to 191 (HNHPSGDPTPSKED).

Belongs to the UPF0758 family.

This Clostridium botulinum (strain Eklund 17B / Type B) protein is UPF0758 protein CLL_A0562.